The primary structure comprises 205 residues: MTVHPDHYLIAAPVARLIEEFARLPGIGPKTASRLTFYLLRAEPKQAQALAQAILDVKAQVGYCRRCFNITVDELCPICRDPSRDQTKICVVEEPLDVLAIERTGAYRGLYHVLHGHIAPLEGIYREDLKIDELIARVRSEPVNEVILATNPNTEGEATAFLLLRDLAPLGVRVTRPARGLPTGGDLEWADPETLGSALEGRREL.

A C4-type zinc finger spans residues 64–79 (CRRCFNITVDELCPIC). The 96-residue stretch at 87-182 (TKICVVEEPL…RVTRPARGLP (96 aa)) folds into the Toprim domain.

It belongs to the RecR family.

In terms of biological role, may play a role in DNA repair. It seems to be involved in an RecBC-independent recombinational process of DNA repair. It may act with RecF and RecO. In Chloroflexus aggregans (strain MD-66 / DSM 9485), this protein is Recombination protein RecR.